Reading from the N-terminus, the 174-residue chain is ATP synthase subunit delta (174 aa).

It belongs to the ATPase delta chain family. As to quaternary structure, F-type ATPases have 2 components, F(1) - the catalytic core - and F(0) - the membrane proton channel. F(1) has five subunits: alpha(3), beta(3), gamma(1), delta(1), epsilon(1). F(0) has three main subunits: a(1), b(2) and c(10-14). The alpha and beta chains form an alternating ring which encloses part of the gamma chain. F(1) is attached to F(0) by a central stalk formed by the gamma and epsilon chains, while a peripheral stalk is formed by the delta and b chains.

The protein resides in the cell inner membrane. F(1)F(0) ATP synthase produces ATP from ADP in the presence of a proton or sodium gradient. F-type ATPases consist of two structural domains, F(1) containing the extramembraneous catalytic core and F(0) containing the membrane proton channel, linked together by a central stalk and a peripheral stalk. During catalysis, ATP synthesis in the catalytic domain of F(1) is coupled via a rotary mechanism of the central stalk subunits to proton translocation. In terms of biological role, this protein is part of the stalk that links CF(0) to CF(1). It either transmits conformational changes from CF(0) to CF(1) or is implicated in proton conduction. This chain is ATP synthase subunit delta, found in Francisella tularensis subsp. mediasiatica (strain FSC147).